A 436-amino-acid chain; its full sequence is GTPase Der (436 aa).

EngA-type G domains follow at residues 4–167 (PTIA…PEQQ) and 176–351 (IKFS…ENHR). GTP-binding positions include 10-17 (GRANVGKS), 57-61 (DTGGI), 119-122 (NKID), 182-189 (GRPNVGKS), 229-233 (DTAGM), and 294-297 (NKWD). One can recognise a KH-like domain in the interval 352-436 (KRVQSSTLNE…PLHLIARKRN (85 aa)).

Belongs to the TRAFAC class TrmE-Era-EngA-EngB-Septin-like GTPase superfamily. EngA (Der) GTPase family. Associates with the 50S ribosomal subunit.

In terms of biological role, GTPase that plays an essential role in the late steps of ribosome biogenesis. This chain is GTPase Der, found in Macrococcus caseolyticus (strain JCSC5402) (Macrococcoides caseolyticum).